The following is a 266-amino-acid chain: GFP-like fluorescent chromoprotein cFP484 (266 aa).

Positions 104 to 106 (QYG) form a cross-link, 2-iminomethyl-5-imidazolinone (Gln-Gly). The residue at position 105 (tyrosine 105) is a 2,3-didehydrotyrosine.

Belongs to the GFP family. Contains a chromophore consisting of modified amino acid residues. The chromophore is formed by autocatalytic backbone condensation between Xaa-N and Gly-(N+2), oxidation of Tyr-(N+1) to didehydrotyrosine, and formation of a double bond to the alpha-amino nitrogen of residue Xaa-N. Maturation of the chromophore requires nothing other than molecular oxygen. The precise stereochemistry of the tyrosine has not been determined. In terms of tissue distribution, tentacle and oral disk.

In terms of biological role, pigment protein that is green in color. The sequence is that of GFP-like fluorescent chromoprotein cFP484 from Clavularia sp. (Brown star polyp).